We begin with the raw amino-acid sequence, 401 residues long: Exodeoxyribonuclease 7 large subunit (401 aa).

It belongs to the XseA family. Heterooligomer composed of large and small subunits.

The protein resides in the cytoplasm. It catalyses the reaction Exonucleolytic cleavage in either 5'- to 3'- or 3'- to 5'-direction to yield nucleoside 5'-phosphates.. In terms of biological role, bidirectionally degrades single-stranded DNA into large acid-insoluble oligonucleotides, which are then degraded further into small acid-soluble oligonucleotides. This Clostridioides difficile (strain 630) (Peptoclostridium difficile) protein is Exodeoxyribonuclease 7 large subunit.